A 414-amino-acid polypeptide reads, in one-letter code: Alanine--glyoxylate aminotransferase (414 aa).

The N-terminal 23 residues, 1-23, are a transit peptide targeting the mitochondrion; the sequence is MFQALAKASAALGPRAAGWVRTM. N6-(pyridoxal phosphate)lysine is present on Lys-231. 2 positions are modified to N6-acetyllysine: Lys-256 and Lys-334. Residue Arg-382 participates in substrate binding.

Belongs to the class-V pyridoxal-phosphate-dependent aminotransferase family. Homodimer. The cofactor is pyridoxal 5'-phosphate.

It localises to the peroxisome. It is found in the mitochondrion matrix. The catalysed reaction is L-serine + pyruvate = 3-hydroxypyruvate + L-alanine. The enzyme catalyses glyoxylate + L-alanine = glycine + pyruvate. Catalyzes the transamination of glyoxylate to glycine and contributes to the glyoxylate detoxification. In terms of biological role, catalyzes the transamination between L-serine and pyruvate and weakly contributes to gluconeogenesis from the L-serine metabolism. This Callithrix jacchus (White-tufted-ear marmoset) protein is Alanine--glyoxylate aminotransferase.